Here is a 485-residue protein sequence, read N- to C-terminus: Subtilisin-like protease 1 (485 aa).

The signal sequence occupies residues Met-1–Ala-19. A propeptide spanning residues Gly-20–His-116 is cleaved from the precursor. Positions Ser-34–His-116 constitute an Inhibitor I9 domain. The Peptidase S8 domain maps to Ser-126–Lys-400. Residues Asp-158 and His-190 each act as charge relay system in the active site. Residue Asn-251 is glycosylated (N-linked (GlcNAc...) asparagine). The active-site Charge relay system is Ser-345. The segment covering Gly-377–Ile-394 has biased composition (polar residues). The segment at Gly-377–Asn-462 is disordered. The segment covering Pro-409 to Pro-418 has biased composition (pro residues). The span at Ser-419–Gln-428 shows a compositional bias: low complexity. Residues Pro-433–Pro-455 are compositionally biased toward pro residues.

The protein belongs to the peptidase S8 family.

Its subcellular location is the secreted. Its function is as follows. Secreted subtilisin-like serine protease with keratinolytic activity that contributes to pathogenicity. This chain is Subtilisin-like protease 1 (SUB1), found in Arthroderma otae (Microsporum canis).